A 121-amino-acid polypeptide reads, in one-letter code: Nitrogen fixation nifHD region GlnB-like protein 2 (121 aa).

The protein belongs to the P(II) protein family.

In terms of biological role, could be involved in the regulation of nitrogen fixation. This Methanothermobacter marburgensis (strain ATCC BAA-927 / DSM 2133 / JCM 14651 / NBRC 100331 / OCM 82 / Marburg) (Methanobacterium thermoautotrophicum) protein is Nitrogen fixation nifHD region GlnB-like protein 2 (glnBB).